Consider the following 62-residue polypeptide: Metallothionein (62 aa).

Residue M1 is modified to N-acetylmethionine. The tract at residues 1–30 is beta; the sequence is MDPQDCKCETGASCSCGTTCSCSNCKCTSC. A divalent metal cation-binding residues include C6, C8, C14, C16, C20, C22, C25, C27, C30, C34, C35, C37, C38, C42, C45, C49, C51, C58, C60, and C61. An alpha region spans residues 31–62; that stretch reads KKSCCSCCPAECSKCSQGCHCEKGSKKCSCCN.

This sequence belongs to the metallothionein superfamily. Type 1 family.

Metallothioneins have a high content of cysteine residues that bind various heavy metals. This chain is Metallothionein (mt-a), found in Xenopus laevis (African clawed frog).